A 158-amino-acid polypeptide reads, in one-letter code: NADH-quinone oxidoreductase subunit B 2 (158 aa).

The [4Fe-4S] cluster site is built by C37, C38, C102, and C132.

This sequence belongs to the complex I 20 kDa subunit family. In terms of assembly, NDH-1 is composed of 14 different subunits. Subunits NuoB, C, D, E, F, and G constitute the peripheral sector of the complex. Requires [4Fe-4S] cluster as cofactor.

Its subcellular location is the cell inner membrane. The enzyme catalyses a quinone + NADH + 5 H(+)(in) = a quinol + NAD(+) + 4 H(+)(out). Functionally, NDH-1 shuttles electrons from NADH, via FMN and iron-sulfur (Fe-S) centers, to quinones in the respiratory chain. Couples the redox reaction to proton translocation (for every two electrons transferred, four hydrogen ions are translocated across the cytoplasmic membrane), and thus conserves the redox energy in a proton gradient. The sequence is that of NADH-quinone oxidoreductase subunit B 2 from Acidithiobacillus ferrooxidans (strain ATCC 53993 / BNL-5-31) (Leptospirillum ferrooxidans (ATCC 53993)).